A 345-amino-acid chain; its full sequence is IGF-like family receptor 1 (345 aa).

The N-terminal stretch at Met-1–Ala-20 is a signal peptide. The Extracellular portion of the chain corresponds to Ala-21–Ser-163. A glycan (N-linked (GlcNAc...) asparagine) is linked at Asn-87. The interval Val-106–Thr-149 is disordered. The span at Arg-111–Val-121 shows a compositional bias: basic residues. The span at Ala-136–Thr-149 shows a compositional bias: polar residues. The helical transmembrane segment at Val-164–Leu-184 threads the bilayer. The Cytoplasmic segment spans residues Leu-185–Gly-345.

Ubiquitously expressed with higher expression in lymph node. Highly expressed in T-cells and monocytes.

Its subcellular location is the cell membrane. Functionally, probable cell membrane receptor for the IGF-like family protein IGFL. In Mus musculus (Mouse), this protein is IGF-like family receptor 1 (Igflr1).